A 193-amino-acid polypeptide reads, in one-letter code: Peptidyl-tRNA hydrolase (193 aa).

Tyr15 contacts tRNA. Residue His20 is the Proton acceptor of the active site. TRNA is bound by residues Phe65, Asn67, and Asn113.

This sequence belongs to the PTH family. Monomer.

Its subcellular location is the cytoplasm. It carries out the reaction an N-acyl-L-alpha-aminoacyl-tRNA + H2O = an N-acyl-L-amino acid + a tRNA + H(+). Its function is as follows. Hydrolyzes ribosome-free peptidyl-tRNAs (with 1 or more amino acids incorporated), which drop off the ribosome during protein synthesis, or as a result of ribosome stalling. Functionally, catalyzes the release of premature peptidyl moieties from peptidyl-tRNA molecules trapped in stalled 50S ribosomal subunits, and thus maintains levels of free tRNAs and 50S ribosomes. The protein is Peptidyl-tRNA hydrolase of Ehrlichia ruminantium (strain Gardel).